The primary structure comprises 410 residues: MKNLVGRFMRYVTFDTQSKPKNHHCPSSTGQKVFAQALYEELLELGLSDVSLDDHGYVMAKLPSNVNYPVPAIGFIAHMDTSPDACGKHVKPQIVEDYQGGDIALGKGDEVLSPIQYPDLHLLHGYNLITTDGTTLLGADNKAGIAEIITAMEILLADSSIPHGDISIAFTPDEEIGRGANHFDVAKFAAQWAYTIDGGPIGELEYENFNAATATVVCHGVNLHPGTAKDKMVNAMHIAAQFILMMPENETPQHTEGYQGFYHLSGATMSVAKSELKYILRDFEASGLQARQALMQAKVAELNQQLKKGRVEVSFEQSYSNMKEKVEPHPHIIELAKQAMVACDVEPKIKPIRGGTDGARLSFMGLPCPNIFTGGYNFHGIHEFITIEGMEAAVQVIMKLAEKTALHYRQ.

A Zn(2+)-binding site is contributed by H78. D80 is an active-site residue. D140 contributes to the Zn(2+) binding site. The active-site Proton acceptor is the E174. E175, D197, and H379 together coordinate Zn(2+).

The protein belongs to the peptidase M20B family. Zn(2+) is required as a cofactor.

The protein localises to the cytoplasm. It carries out the reaction Release of the N-terminal residue from a tripeptide.. Cleaves the N-terminal amino acid of tripeptides. This chain is Peptidase T, found in Vibrio cholerae serotype O1 (strain ATCC 39541 / Classical Ogawa 395 / O395).